Reading from the N-terminus, the 1862-residue chain is Chitin synthase V (1862 aa).

A disordered region spans residues 1–26; that stretch reads MAMSLPQLGGAGGPHTQPSLPSLPAH. One can recognise a Myosin motor domain in the interval 1–778; that stretch reads MAMSLPQLGG…CWMEIAQLGE (778 aa). N-linked (GlcNAc...) asparagine glycosylation is present at Asn-63. An ATP-binding site is contributed by 104–111; the sequence is GESGAGKS. N-linked (GlcNAc...) asparagine glycans are attached at residues Asn-123, Asn-429, Asn-483, Asn-522, and Asn-560. A disordered region spans residues 592-643; that stretch reads TVSSKPMRAPSVMSRKTHRTGRPSTAYKRQQQEAMEELDQQSQAGESKKNAK. The interval 658-682 is actin-binding; that stretch reads LDNVQKAVTDPGTNSYFVFCLKPND. 2 helical membrane passes run 884–904 and 923–943; these read WVALVFFLTWFIPDFAIRLIG and MLIWLMCAVAAFFMVGFPMLI. Residues 947 to 1009 enclose the Cytochrome b5 heme-binding domain; that stretch reads QYVYSSNELS…YAGKDISALF (63 aa). Asn-1036, Asn-1063, and Asn-1192 each carry an N-linked (GlcNAc...) asparagine glycan. The chain crosses the membrane as a helical span at residues 1202–1222; the sequence is FILAISVMLASILVFKFLAAL. 2 N-linked (GlcNAc...) asparagine glycosylation sites follow: Asn-1459 and Asn-1565. The next 3 membrane-spanning stretches (helical) occupy residues 1590 to 1610, 1623 to 1643, and 1650 to 1670; these read FVVFIDLLSTIVQPVIVMYIV, VPITAFLLLGAIYGLQAVIFI, and MVGWMIMYIAAIPVFSFGLPL. Asn-1771 carries an N-linked (GlcNAc...) asparagine glycan. Positions 1804-1859 constitute a DEK-C domain; the sequence is MPSDDALLAEIRDILKTADLMTVTKKGIKQELERRFNVPLDAKRAYINSATEALLS.

The protein in the N-terminal section; belongs to the TRAFAC class myosin-kinesin ATPase superfamily. Myosin family. In the C-terminal section; belongs to the chitin synthase family. Class V subfamily.

The protein resides in the cell membrane. It carries out the reaction [(1-&gt;4)-N-acetyl-beta-D-glucosaminyl](n) + UDP-N-acetyl-alpha-D-glucosamine = [(1-&gt;4)-N-acetyl-beta-D-glucosaminyl](n+1) + UDP + H(+). In terms of biological role, polymerizes chitin, a structural polymer of the cell wall and septum, by transferring the sugar moiety of UDP-GlcNAc to the non-reducing end of the growing chitin polymer. ChsV and chsVb do perform additive, but not redundant, functions in septum formation. Involved in cell wall integrity and resistance to antimicrobial plant defense compounds such as the tomato phytoanticipin alpha-tomatine or H(2)O(2), and plays a crucial role in vascular colonization and pathogenicity. Also plays an important role in nuclear sorting or distribution. This Fusarium oxysporum f. sp. lycopersici (strain 4287 / CBS 123668 / FGSC 9935 / NRRL 34936) (Fusarium vascular wilt of tomato) protein is Chitin synthase V.